The following is a 192-amino-acid chain: Orotate phosphoribosyltransferase (192 aa).

116–124 (EDIVTTGLS) serves as a coordination point for 5-phospho-alpha-D-ribose 1-diphosphate. Positions 120 and 148 each coordinate orotate.

Belongs to the purine/pyrimidine phosphoribosyltransferase family. PyrE subfamily. In terms of assembly, homodimer. It depends on Mg(2+) as a cofactor.

The enzyme catalyses orotidine 5'-phosphate + diphosphate = orotate + 5-phospho-alpha-D-ribose 1-diphosphate. Its pathway is pyrimidine metabolism; UMP biosynthesis via de novo pathway; UMP from orotate: step 1/2. In terms of biological role, catalyzes the transfer of a ribosyl phosphate group from 5-phosphoribose 1-diphosphate to orotate, leading to the formation of orotidine monophosphate (OMP). The chain is Orotate phosphoribosyltransferase from Bartonella henselae (strain ATCC 49882 / DSM 28221 / CCUG 30454 / Houston 1) (Rochalimaea henselae).